Reading from the N-terminus, the 284-residue chain is Aspartate dehydrogenase domain-containing protein (284 aa).

Belongs to the L-aspartate dehydrogenase family.

The sequence is that of Aspartate dehydrogenase domain-containing protein (aspdh) from Xenopus tropicalis (Western clawed frog).